The following is a 421-amino-acid chain: Subtilisin-like protease 2 (421 aa).

The first 16 residues, 1–16 (MQLLNFGLLLLPFVAG), serve as a signal peptide directing secretion. A propeptide spanning residues 17–122 (DLAPQPEPLL…VHPDQHVYLA (106 aa)) is cleaved from the precursor. Residues 36–122 (QYIVTLKEGL…VHPDQHVYLA (87 aa)) form the Inhibitor I9 domain. A Peptidase S8 domain is found at 131–421 (RWGLGYMSSK…ERKFTLPKYY (291 aa)). Catalysis depends on charge relay system residues Asp169 and His201. N-linked (GlcNAc...) asparagine glycans are attached at residues Asn248, Asn261, and Asn348. Ser357 acts as the Charge relay system in catalysis. N-linked (GlcNAc...) asparagine glycosylation is present at Asn388.

The protein belongs to the peptidase S8 family.

The protein localises to the secreted. In terms of biological role, secreted subtilisin-like serine protease with keratinolytic activity that contributes to pathogenicity. This Trichophyton verrucosum (strain HKI 0517) protein is Subtilisin-like protease 2 (SUB2).